The sequence spans 84 residues: ATP synthase subunit c (84 aa).

The next 2 membrane-spanning stretches (helical) occupy residues 9–29 (IIGASILLAFAALGTAIGFAI) and 54–74 (IVAGLLDAIAMIAVGISLLFI).

This sequence belongs to the ATPase C chain family. In terms of assembly, F-type ATPases have 2 components, F(1) - the catalytic core - and F(0) - the membrane proton channel. F(1) has five subunits: alpha(3), beta(3), gamma(1), delta(1), epsilon(1). F(0) has three main subunits: a(1), b(2) and c(10-14). The alpha and beta chains form an alternating ring which encloses part of the gamma chain. F(1) is attached to F(0) by a central stalk formed by the gamma and epsilon chains, while a peripheral stalk is formed by the delta and b chains.

Its subcellular location is the cell inner membrane. Functionally, f(1)F(0) ATP synthase produces ATP from ADP in the presence of a proton or sodium gradient. F-type ATPases consist of two structural domains, F(1) containing the extramembraneous catalytic core and F(0) containing the membrane proton channel, linked together by a central stalk and a peripheral stalk. During catalysis, ATP synthesis in the catalytic domain of F(1) is coupled via a rotary mechanism of the central stalk subunits to proton translocation. In terms of biological role, key component of the F(0) channel; it plays a direct role in translocation across the membrane. A homomeric c-ring of between 10-14 subunits forms the central stalk rotor element with the F(1) delta and epsilon subunits. This chain is ATP synthase subunit c, found in Glaesserella parasuis serovar 5 (strain SH0165) (Haemophilus parasuis).